A 288-amino-acid polypeptide reads, in one-letter code: Polyamine aminopropyltransferase (288 aa).

In terms of domain architecture, PABS spans 9–242 (SEWLDEYHQG…GLWSWTFASM (234 aa)). Residue Gln36 participates in S-methyl-5'-thioadenosine binding. His67 and Asp91 together coordinate spermidine. Residues Glu111 and 143 to 144 (NG) each bind S-methyl-5'-thioadenosine. The active-site Proton acceptor is the Asp162. An S-methyl-5'-thioadenosine-binding site is contributed by Pro169.

The protein belongs to the spermidine/spermine synthase family. In terms of assembly, homodimer or homotetramer.

The protein localises to the cytoplasm. The enzyme catalyses S-adenosyl 3-(methylsulfanyl)propylamine + putrescine = S-methyl-5'-thioadenosine + spermidine + H(+). Its pathway is amine and polyamine biosynthesis; spermidine biosynthesis; spermidine from putrescine: step 1/1. Catalyzes the irreversible transfer of a propylamine group from the amino donor S-adenosylmethioninamine (decarboxy-AdoMet) to putrescine (1,4-diaminobutane) to yield spermidine. This Prochlorococcus marinus (strain NATL2A) protein is Polyamine aminopropyltransferase.